Reading from the N-terminus, the 288-residue chain is Lysosomal thioesterase PPT2 homolog (288 aa).

Residues 1–22 form the signal peptide; sequence MRLRLQVLVALLTCSSISVSLA. Residue serine 98 is the Nucleophile of the active site. Asparagine 192 carries an N-linked (GlcNAc...) asparagine glycan. Catalysis depends on residues aspartate 214 and histidine 269.

The protein belongs to the palmitoyl-protein thioesterase family. As to expression, expressed in adult head and crop.

The protein resides in the lysosome. The catalysed reaction is hexadecanoyl-CoA + H2O = hexadecanoate + CoA + H(+). The enzyme catalyses S-hexadecanoyl-N-acetylcysteamine + H2O = N-acetylcysteamine + hexadecanoate + H(+). In terms of biological role, catalyzes the cleavage of thioester bonds from S-palmitoyl-CoA or S-palmitoyl-N-acetylcysteamine (unbranched structures) but does not have activity against palmitoylcysteine or palmitoylated proteins, branched structures or bulky head groups. Conversely, hydrolyzes both long and short chain fatty acyl-CoA substrate. This Drosophila melanogaster (Fruit fly) protein is Lysosomal thioesterase PPT2 homolog (Ppt2).